A 997-amino-acid polypeptide reads, in one-letter code: Burkholderia TALE-like protein 2 (997 aa).

The Cryptic repeat -1 repeat unit spans residues 19-50 (LSPLERIKIEKHYGGGATLAFISNQHDELAQV). One copy of the Cryptic repeat 0 repeat lies at 51 to 83 (LSRADILKIASYDCAAQALQAVLDCGPMLGKRG). 27 Core repeat repeats span residues 84–116 (FSRA…GKRG), 117–147 (FSQV…GERG), 148–180 (FSRG…RERG), 181–213 (FNQA…GKRG), 214–244 (FSRV…RKRG), 245–277 (FHPT…RERG), 278–310 (FSQA…CERG), 311–343 (FSQP…RERG), 344–376 (FSQA…HERG), 377–409 (FSQA…RERG), 410–442 (FSQP…RERG), 443–475 (VRQA…RERG), 476–508 (FNQA…DKRG), 509–539 (FSRV…RKRG), 540–572 (FNPT…RERG), 573–605 (FNQA…RERG), 606–638 (FSQP…HKRG), 639–671 (FNPT…RERG), 672–704 (FGQP…RERG), 705–737 (FSQP…RERG), 738–770 (FSQS…RESD), 771–803 (FRQA…RQRG), 804–836 (FNRA…DERG), 837–869 (FNLT…QQRG), 870–902 (FNLT…RQRG), 903–935 (FNLI…RQRD), and 936–967 (LSLI…MQAG). The interval 84-967 (FSRADIVRIA…KYGPVLMQAG (884 aa)) is buD domain. ANK repeat units follow at residues 772-801 (RQAD…RLRQ), 805-834 (NRAS…TLDE), 838-867 (NLTN…TLQQ), and 871-900 (NLTD…TLRQ). One copy of the Cryptic repeat +1 repeat lies at 968–997 (RSNEEIVHVAARRGGAGRIRKMVALLLERQ).

Belongs to the transcription activator-like effector (TALE) family. Bat subfamily.

Functionally, binds to DNA in a sequence-specific manner. The polypeptide is Burkholderia TALE-like protein 2 (Mycetohabitans rhizoxinica (strain DSM 19002 / CIP 109453 / HKI 454) (Paraburkholderia rhizoxinica)).